We begin with the raw amino-acid sequence, 272 residues long: MNNSEQLIALKESETAFLKYFNKADYELVDFSLVEKLDWKQLNHEDLQQMGERNFWQHEHQIYALRNDFTDQLLRYYSMYPTAATKVAYTGLIIRNNEAAVQVGLENYAPSLANVQQSLKLFIQFIQQQLRDNVHFVVLGHYQLLDALLDKSLQTPDILSMIEERNLSGLVTYLSTEHPIVQILKENTQQQLNVLEHYIPNDHPALVELKIWERWLHTQGYKDIHLDITAQPPRSYYTGLFIQCHFAENESRVLTGGYYKGSIEGFGLGLTL.

It belongs to the class-II aminoacyl-tRNA synthetase family. HisZ subfamily. In terms of assembly, heteromultimer composed of HisG and HisZ subunits.

The protein localises to the cytoplasm. It participates in amino-acid biosynthesis; L-histidine biosynthesis; L-histidine from 5-phospho-alpha-D-ribose 1-diphosphate: step 1/9. Its function is as follows. Required for the first step of histidine biosynthesis. May allow the feedback regulation of ATP phosphoribosyltransferase activity by histidine. This Staphylococcus aureus (strain MRSA252) protein is ATP phosphoribosyltransferase regulatory subunit.